A 270-amino-acid chain; its full sequence is Putative carbamate hydrolase RutD (270 aa).

The protein belongs to the AB hydrolase superfamily. Hydrolase RutD family.

The enzyme catalyses carbamate + 2 H(+) = NH4(+) + CO2. In terms of biological role, involved in pyrimidine catabolism. May facilitate the hydrolysis of carbamate, a reaction that can also occur spontaneously. In Escherichia coli (strain SMS-3-5 / SECEC), this protein is Putative carbamate hydrolase RutD.